The following is an 87-amino-acid chain: MSERNNRKVYTGKVVSDKMDKTITVVVETYKTHSLYGKRVKYSKKYKAHDENNTAKMGDIVKIMETRPLSATKRFRLVEVVEESVII.

This sequence belongs to the universal ribosomal protein uS17 family. Part of the 30S ribosomal subunit.

One of the primary rRNA binding proteins, it binds specifically to the 5'-end of 16S ribosomal RNA. The polypeptide is Small ribosomal subunit protein uS17 (Macrococcus caseolyticus (strain JCSC5402) (Macrococcoides caseolyticum)).